The primary structure comprises 251 residues: Cobalt transport protein CbiM (251 aa).

The first 27 residues, 1–27, serve as a signal peptide directing secretion; it reads MNKKKNTILIGLYFLVGIMLFPDRIYA. A run of 6 helical transmembrane segments spans residues 35–55, 66–86, 103–123, 131–151, 166–186, and 208–228; these read LPVKWAGIWWIAMLPFLALGI, GPGIKMLLALAGAFVFVLSSL, LGAILFGPWPMVVLGCIVLIF, GGLTTLGANVFSMAIVGPFVA, WLSVFTGSALGNLLTYITTAT, and VFATTQVPLAVTEGLVTVLIF.

This sequence belongs to the CbiM family. In terms of assembly, forms an energy-coupling factor (ECF) transporter complex composed of an ATP-binding protein (A component, CbiO), a transmembrane protein (T component, CbiQ) and 2 possible substrate-capture proteins (S components, CbiM and CbiN) of unknown stoichimetry.

The protein resides in the cell membrane. It participates in cofactor biosynthesis; adenosylcobalamin biosynthesis. Its function is as follows. Part of the energy-coupling factor (ECF) transporter complex CbiMNOQ involved in cobalt import. The polypeptide is Cobalt transport protein CbiM (Acetohalobium arabaticum (strain ATCC 49924 / DSM 5501 / Z-7288)).